We begin with the raw amino-acid sequence, 389 residues long: Phospho-N-acetylmuramoyl-pentapeptide-transferase (389 aa).

The next 10 helical transmembrane spans lie at 25–45 (RAVMATITALGIGLVCGPWVI), 73–93 (TMGGVLILIGIAVATLLWGDL), 97–117 (FIWIVMLVTFGFGVIGWVDDY), 135–155 (FWQSVIGLFAAVYLAFSVSEA), 190–210 (ISYPLGVWGFIVLTYFVIVGA), 222–242 (GLVIMPVVLVGGSLGVFAYVM), 258–278 (GAGELLIFCSAMGGAGLAFLW), 286–306 (VFMGDVGALALGGALGTVAVI), 311–331 (IVLFIMGGIFVAETLSVMLQV), and 366–386 (QVVVRFWIITLMLCLFGLSTL).

Belongs to the glycosyltransferase 4 family. MraY subfamily. It depends on Mg(2+) as a cofactor.

The protein localises to the cell inner membrane. The catalysed reaction is UDP-N-acetyl-alpha-D-muramoyl-L-alanyl-gamma-D-glutamyl-meso-2,6-diaminopimeloyl-D-alanyl-D-alanine + di-trans,octa-cis-undecaprenyl phosphate = di-trans,octa-cis-undecaprenyl diphospho-N-acetyl-alpha-D-muramoyl-L-alanyl-D-glutamyl-meso-2,6-diaminopimeloyl-D-alanyl-D-alanine + UMP. It participates in cell wall biogenesis; peptidoglycan biosynthesis. In terms of biological role, catalyzes the initial step of the lipid cycle reactions in the biosynthesis of the cell wall peptidoglycan: transfers peptidoglycan precursor phospho-MurNAc-pentapeptide from UDP-MurNAc-pentapeptide onto the lipid carrier undecaprenyl phosphate, yielding undecaprenyl-pyrophosphoryl-MurNAc-pentapeptide, known as lipid I. This chain is Phospho-N-acetylmuramoyl-pentapeptide-transferase, found in Burkholderia ambifaria (strain ATCC BAA-244 / DSM 16087 / CCUG 44356 / LMG 19182 / AMMD) (Burkholderia cepacia (strain AMMD)).